A 109-amino-acid chain; its full sequence is MSQGIEFNRLMLDMRSMQMDAMAQPKSVAPAPELGQSSFADMLGQAINKVSDTQQASSQLANAFEIGKSGVDLTDVMVASQKASVSFQALTQVRNKLVQAYQDIMQMPV.

This sequence belongs to the FliE family.

The protein resides in the bacterial flagellum basal body. This chain is Flagellar hook-basal body complex protein FliE, found in Pseudomonas fluorescens (strain SBW25).